A 546-amino-acid chain; its full sequence is CTP synthase (546 aa).

The amidoligase domain stretch occupies residues 1–266 (MTTRYIFVTG…DELVVKRFSL (266 aa)). Ser-14 serves as a coordination point for CTP. Residue Ser-14 participates in UTP binding. ATP-binding positions include 15–20 (SLGKGI) and Asp-72. Residues Asp-72 and Glu-140 each contribute to the Mg(2+) site. CTP contacts are provided by residues 147–149 (DIE), 187–192 (KTKPTQ), and Lys-223. UTP-binding positions include 187–192 (KTKPTQ) and Lys-223. 239–241 (KDV) contributes to the ATP binding site. The Glutamine amidotransferase type-1 domain maps to 291-542 (VIGMVGKYIE…VAAASAHQKR (252 aa)). An L-glutamine-binding site is contributed by Gly-352. Cys-379 (nucleophile; for glutamine hydrolysis) is an active-site residue. L-glutamine is bound by residues 380 to 383 (LGMQ), Glu-403, and Arg-470. Catalysis depends on residues His-515 and Glu-517.

Belongs to the CTP synthase family. Homotetramer.

The catalysed reaction is UTP + L-glutamine + ATP + H2O = CTP + L-glutamate + ADP + phosphate + 2 H(+). The enzyme catalyses L-glutamine + H2O = L-glutamate + NH4(+). It carries out the reaction UTP + NH4(+) + ATP = CTP + ADP + phosphate + 2 H(+). It participates in pyrimidine metabolism; CTP biosynthesis via de novo pathway; CTP from UDP: step 2/2. Its activity is regulated as follows. Allosterically activated by GTP, when glutamine is the substrate; GTP has no effect on the reaction when ammonia is the substrate. The allosteric effector GTP functions by stabilizing the protein conformation that binds the tetrahedral intermediate(s) formed during glutamine hydrolysis. Inhibited by the product CTP, via allosteric rather than competitive inhibition. Its function is as follows. Catalyzes the ATP-dependent amination of UTP to CTP with either L-glutamine or ammonia as the source of nitrogen. Regulates intracellular CTP levels through interactions with the four ribonucleotide triphosphates. The sequence is that of CTP synthase from Shewanella oneidensis (strain ATCC 700550 / JCM 31522 / CIP 106686 / LMG 19005 / NCIMB 14063 / MR-1).